A 177-amino-acid chain; its full sequence is Large ribosomal subunit protein uL10 (177 aa).

Belongs to the universal ribosomal protein uL10 family. As to quaternary structure, part of the ribosomal stalk of the 50S ribosomal subunit. The N-terminus interacts with L11 and the large rRNA to form the base of the stalk. The C-terminus forms an elongated spine to which L12 dimers bind in a sequential fashion forming a multimeric L10(L12)X complex.

Its function is as follows. Forms part of the ribosomal stalk, playing a central role in the interaction of the ribosome with GTP-bound translation factors. This chain is Large ribosomal subunit protein uL10, found in Legionella pneumophila (strain Paris).